Here is a 31-residue protein sequence, read N- to C-terminus: Cytochrome b6-f complex subunit 6 (31 aa).

Residues 4-24 (ITSYFGFLLAVLIITSSLFIG) form a helical membrane-spanning segment.

This sequence belongs to the PetL family. The 4 large subunits of the cytochrome b6-f complex are cytochrome b6, subunit IV (17 kDa polypeptide, PetD), cytochrome f and the Rieske protein, while the 4 small subunits are PetG, PetL, PetM and PetN. The complex functions as a dimer.

Its subcellular location is the plastid. The protein localises to the chloroplast thylakoid membrane. Component of the cytochrome b6-f complex, which mediates electron transfer between photosystem II (PSII) and photosystem I (PSI), cyclic electron flow around PSI, and state transitions. PetL is important for photoautotrophic growth as well as for electron transfer efficiency and stability of the cytochrome b6-f complex. The polypeptide is Cytochrome b6-f complex subunit 6 (Phaseolus vulgaris (Kidney bean)).